The primary structure comprises 348 residues: Nicotinate-nucleotide--dimethylbenzimidazole phosphoribosyltransferase (348 aa).

Residue E316 is the Proton acceptor of the active site.

It belongs to the CobT family.

The catalysed reaction is 5,6-dimethylbenzimidazole + nicotinate beta-D-ribonucleotide = alpha-ribazole 5'-phosphate + nicotinate + H(+). Its pathway is nucleoside biosynthesis; alpha-ribazole biosynthesis; alpha-ribazole from 5,6-dimethylbenzimidazole: step 1/2. In terms of biological role, catalyzes the synthesis of alpha-ribazole-5'-phosphate from nicotinate mononucleotide (NAMN) and 5,6-dimethylbenzimidazole (DMB). The protein is Nicotinate-nucleotide--dimethylbenzimidazole phosphoribosyltransferase of Xanthomonas campestris pv. campestris (strain B100).